The primary structure comprises 931 residues: Valine--tRNA ligase (931 aa).

The 'HIGH' region signature appears at 42-52; it reads PNVTGSLHMGH. The 'KMSKS' region motif lies at 523–527; it reads KMSKS. ATP is bound at residue lysine 526. A coiled-coil region spans residues 859–931; it reads MAGLIDKEAE…EEQLEKIKYL (73 aa).

It belongs to the class-I aminoacyl-tRNA synthetase family. ValS type 1 subfamily. In terms of assembly, monomer.

Its subcellular location is the cytoplasm. It carries out the reaction tRNA(Val) + L-valine + ATP = L-valyl-tRNA(Val) + AMP + diphosphate. Its function is as follows. Catalyzes the attachment of valine to tRNA(Val). As ValRS can inadvertently accommodate and process structurally similar amino acids such as threonine, to avoid such errors, it has a 'posttransfer' editing activity that hydrolyzes mischarged Thr-tRNA(Val) in a tRNA-dependent manner. This Alcanivorax borkumensis (strain ATCC 700651 / DSM 11573 / NCIMB 13689 / SK2) protein is Valine--tRNA ligase.